The sequence spans 89 residues: Large ribosomal subunit protein bL27 (89 aa).

The disordered stretch occupies residues 1 to 24 (MAHKKGTGSTRNGRDSNAKRLGVK).

The protein belongs to the bacterial ribosomal protein bL27 family.

The sequence is that of Large ribosomal subunit protein bL27 from Synechococcus sp. (strain JA-2-3B'a(2-13)) (Cyanobacteria bacterium Yellowstone B-Prime).